Reading from the N-terminus, the 95-residue chain is uncharacterized protein (95 aa).

A disordered region spans residues 46–68 (GDRGTNGRTEAEHDGIPHSRKKV).

This is an uncharacterized protein from Schizosaccharomyces pombe (strain 972 / ATCC 24843) (Fission yeast).